Reading from the N-terminus, the 623-residue chain is Peptidoglycan D,D-transpeptidase MrdA (623 aa).

Residues 17–37 (VIVAFGVVVVCFGILIFNLYN) form a helical membrane-spanning segment. Residue Ser326 is the Acyl-ester intermediate of the active site.

The protein belongs to the transpeptidase family. MrdA subfamily.

It localises to the cell inner membrane. The enzyme catalyses Preferential cleavage: (Ac)2-L-Lys-D-Ala-|-D-Ala. Also transpeptidation of peptidyl-alanyl moieties that are N-acyl substituents of D-alanine.. It functions in the pathway cell wall biogenesis; peptidoglycan biosynthesis. Its function is as follows. Catalyzes cross-linking of the peptidoglycan cell wall. In Salmonella typhimurium (strain SL1344), this protein is Peptidoglycan D,D-transpeptidase MrdA.